Consider the following 944-residue polypeptide: Valine--tRNA ligase (944 aa).

Positions 43–53 (PNVTGTLHMGH) match the 'HIGH' region motif. The 'KMSKS' region motif lies at 550–554 (KMSKS). An ATP-binding site is contributed by lysine 553. Residues 878 to 942 (LVDMDAERTR…QLTGLREQRA (65 aa)) adopt a coiled-coil conformation.

This sequence belongs to the class-I aminoacyl-tRNA synthetase family. ValS type 1 subfamily. Monomer.

The protein localises to the cytoplasm. The catalysed reaction is tRNA(Val) + L-valine + ATP = L-valyl-tRNA(Val) + AMP + diphosphate. Its function is as follows. Catalyzes the attachment of valine to tRNA(Val). As ValRS can inadvertently accommodate and process structurally similar amino acids such as threonine, to avoid such errors, it has a 'posttransfer' editing activity that hydrolyzes mischarged Thr-tRNA(Val) in a tRNA-dependent manner. The polypeptide is Valine--tRNA ligase (Xanthomonas axonopodis pv. citri (strain 306)).